The following is a 327-amino-acid chain: Phenylalanine--tRNA ligase alpha subunit (327 aa).

Glu252 contacts Mg(2+).

Belongs to the class-II aminoacyl-tRNA synthetase family. Phe-tRNA synthetase alpha subunit type 1 subfamily. In terms of assembly, tetramer of two alpha and two beta subunits. Mg(2+) serves as cofactor.

It localises to the cytoplasm. The catalysed reaction is tRNA(Phe) + L-phenylalanine + ATP = L-phenylalanyl-tRNA(Phe) + AMP + diphosphate + H(+). This chain is Phenylalanine--tRNA ligase alpha subunit, found in Shewanella oneidensis (strain ATCC 700550 / JCM 31522 / CIP 106686 / LMG 19005 / NCIMB 14063 / MR-1).